A 587-amino-acid polypeptide reads, in one-letter code: Aspartate--tRNA ligase (587 aa).

Residue E174 coordinates L-aspartate. An aspartate region spans residues 198 to 201 (QITK). R220 provides a ligand contact to L-aspartate. ATP is bound by residues 220–222 (RDE) and Q229. L-aspartate is bound at residue H443. E477 contributes to the ATP binding site. L-aspartate is bound at residue R484. 529–532 (GLDR) lines the ATP pocket.

This sequence belongs to the class-II aminoacyl-tRNA synthetase family. Type 1 subfamily. Homodimer.

Its subcellular location is the cytoplasm. It catalyses the reaction tRNA(Asp) + L-aspartate + ATP = L-aspartyl-tRNA(Asp) + AMP + diphosphate. Catalyzes the attachment of L-aspartate to tRNA(Asp) in a two-step reaction: L-aspartate is first activated by ATP to form Asp-AMP and then transferred to the acceptor end of tRNA(Asp). The sequence is that of Aspartate--tRNA ligase from Streptococcus pneumoniae (strain 70585).